We begin with the raw amino-acid sequence, 111 residues long: Ig kappa chain V-III region PC 7769 (111 aa).

The interval 1–23 (DIVLTQSPASLAVSLGQRATISC) is framework-1. Cys-23 and Cys-92 form a disulfide bridge. Residues 24-38 (KASQSVDYDGDSYMN) form a complementarity-determining-1 region. The interval 39 to 53 (WYQQKPGQPPKVLIF) is framework-2. Positions 54–60 (AASNLES) are complementarity-determining-2. A framework-3 region spans residues 61–92 (GIPARFSGSGSGTDFTLNIHPVEEEDAATYYC). The interval 93-101 (QQSNEDPWT) is complementarity-determining-3. Residues 102 to 111 (FGSGTKLEIK) form a framework-4 region.

The polypeptide is Ig kappa chain V-III region PC 7769 (Mus musculus (Mouse)).